The sequence spans 380 residues: Cytochrome b (380 aa).

The next 4 membrane-spanning stretches (helical) occupy residues phenylalanine 34–methionine 54, tryptophan 78–isoleucine 99, tryptophan 114–leucine 134, and phenylalanine 179–leucine 199. Residues histidine 84 and histidine 98 each coordinate heme b. The heme b site is built by histidine 183 and histidine 197. Histidine 202 contacts a ubiquinone. 4 helical membrane-spanning segments follow: residues tyrosine 227–serine 247, leucine 289–histidine 309, methionine 321–glycine 341, and phenylalanine 348–proline 368.

The protein belongs to the cytochrome b family. In terms of assembly, the cytochrome bc1 complex contains 3 respiratory subunits (MT-CYB, CYC1 and UQCRFS1), 2 core proteins (UQCRC1 and UQCRC2) and probably 6 low-molecular weight proteins. The cofactor is heme b.

The protein localises to the mitochondrion inner membrane. Its function is as follows. Component of the ubiquinol-cytochrome c reductase complex (complex III or cytochrome b-c1 complex) that is part of the mitochondrial respiratory chain. The b-c1 complex mediates electron transfer from ubiquinol to cytochrome c. Contributes to the generation of a proton gradient across the mitochondrial membrane that is then used for ATP synthesis. The protein is Cytochrome b (mt-cyb) of Ranodon sibiricus (Siberian salamander).